The chain runs to 446 residues: MSIDINWEAATSGPDGEALAERIRSFIHDKFQQIALPRFIRSVEVNSFDFGTIKPELQIKDLCDPFEDFYEEDEDNEIGDGEVSDIQDRSPKPRPSSAGNERSAADAWQAEHPAFLDDRLCGRIEPHDVPIPSKEDPLASRPIRSPMSFGDPLNPYFFPRAGTPGIPGGTSNLGYYYMPLGGISGTQTPLSSVPRGPFSPGLRDASVFGEPSNSQRPNPSGPARRQSEIDIDTGNSRPSTADTLDSLNIHGIPDPVLPRSSDDAHPNVLPRRDNSPAPRRVREKRPEDLQVLCRLRYNGNIRLSLTALVLLDYPMPNFVGLPLKLNITGLTFDGVAVVAYIRKRVHFCFLSPEDADTLFGADDTNEAGHLQSRDSLAGGINDTSYSSRRPHDSLLRDVRVESEIGRKEDGKQVLKNVGKVEKFVLEQVRRIFEEEFVYPSFWTFLV.

In terms of domain architecture, SMP-LTD spans 1–446 (MSIDINWEAA…VYPSFWTFLV (446 aa)). Over residues 75–85 (DNEIGDGEVSD) the composition is skewed to acidic residues. Disordered regions lie at residues 75–106 (DNEI…SAAD), 126–145 (PHDV…PIRS), and 188–283 (TPLS…RVRE). Positions 126 to 138 (PHDVPIPSKEDPL) are enriched in basic and acidic residues. The segment covering 233 to 246 (TGNSRPSTADTLDS) has biased composition (polar residues). The segment covering 260–274 (SSDDAHPNVLPRRDN) has biased composition (basic and acidic residues).

It belongs to the MDM12 family. In terms of assembly, component of the ER-mitochondria encounter structure (ERMES) or MDM complex, composed of MMM1, MDM10, MDM12 and MDM34. An MMM1 homodimer associates with one molecule of MDM12 on each side in a pairwise head-to-tail manner, and the SMP-LTD domains of MMM1 and MDM12 generate a continuous hydrophobic tunnel for phospholipid trafficking.

The protein localises to the mitochondrion outer membrane. The protein resides in the endoplasmic reticulum membrane. Functionally, component of the ERMES/MDM complex, which serves as a molecular tether to connect the endoplasmic reticulum (ER) and mitochondria. Components of this complex are involved in the control of mitochondrial shape and protein biogenesis, and function in nonvesicular lipid trafficking between the ER and mitochondria. MDM12 is required for the interaction of the ER-resident membrane protein MMM1 and the outer mitochondrial membrane-resident beta-barrel protein MDM10. The MDM12-MMM1 subcomplex functions in the major beta-barrel assembly pathway that is responsible for biogenesis of all mitochondrial outer membrane beta-barrel proteins, and acts in a late step after the SAM complex. The MDM10-MDM12-MMM1 subcomplex further acts in the TOM40-specific pathway after the action of the MDM12-MMM1 complex. Essential for establishing and maintaining the structure of mitochondria and maintenance of mtDNA nucleoids. The polypeptide is Mitochondrial distribution and morphology protein 12 (Coccidioides immitis (strain RS) (Valley fever fungus)).